A 92-amino-acid polypeptide reads, in one-letter code: Protein S100-A6 (92 aa).

EF-hand domains are found at residues 12–47 (LVAIFHKYSSREGDKNTLSKGELKELIQKELTIGAE) and 48–83 (LEDSEIAKLLDDLDQNKDQVVNFQEYVTFLGALAMI). Ca(2+) contacts are provided by Thr-28 and Glu-33. Lys-40 carries the N6-acetyllysine modification. Ca(2+)-binding residues include Asp-61, Asn-63, Asp-65, and Glu-72.

The protein belongs to the S-100 family. As to quaternary structure, homodimer; head to tail assembly of 2 subunits. Interacts with CACYBP in a calcium-dependent manner. Interacts with ANXA2 and ANXA11 (via N-terminus). Interacts with SUGT1. Interacts with TP53; has higher affinity for TP53 that is phosphorylated on its N-terminal domain, and lower affinity for TP53 that is phosphorylated on its C-terminal domain. Interacts with tropomyosin. Interacts with FKBP4. Interacts with PPP5C (via TPR repeats); the interaction is calcium-dependent and modulates PPP5C activity. Interacts with TPPP; this interaction inhibits TPPP dimerization.

The protein resides in the nucleus envelope. The protein localises to the cytoplasm. It localises to the cell membrane. Functionally, may function as calcium sensor and modulator, contributing to cellular calcium signaling. May function by interacting with other proteins, such as TPR-containing proteins, and indirectly play a role in many physiological processes such as the reorganization of the actin cytoskeleton and in cell motility. Binds 2 calcium ions. Calcium binding is cooperative. This is Protein S100-A6 (S100A6) from Equus caballus (Horse).